The sequence spans 520 residues: GMP synthase [glutamine-hydrolyzing] (520 aa).

A Glutamine amidotransferase type-1 domain is found at 9 to 202 (KILILDFGSQ…VRKICGCSGK (194 aa)). Residue Cys-86 is the Nucleophile of the active site. Active-site residues include His-176 and Glu-178. A GMPS ATP-PPase domain is found at 203-395 (WTPGQIIEDA…LGLPHQMVWR (193 aa)). ATP is bound at residue 230–236 (SGGVDSS).

In terms of assembly, homodimer.

It catalyses the reaction XMP + L-glutamine + ATP + H2O = GMP + L-glutamate + AMP + diphosphate + 2 H(+). It functions in the pathway purine metabolism; GMP biosynthesis; GMP from XMP (L-Gln route): step 1/1. Catalyzes the synthesis of GMP from XMP. The protein is GMP synthase [glutamine-hydrolyzing] of Geotalea daltonii (strain DSM 22248 / JCM 15807 / FRC-32) (Geobacter daltonii).